Reading from the N-terminus, the 393-residue chain is NAD(P)H-quinone oxidoreductase subunit H, chloroplastic (393 aa).

Belongs to the complex I 49 kDa subunit family. In terms of assembly, NDH is composed of at least 16 different subunits, 5 of which are encoded in the nucleus.

It is found in the plastid. It localises to the chloroplast thylakoid membrane. It catalyses the reaction a plastoquinone + NADH + (n+1) H(+)(in) = a plastoquinol + NAD(+) + n H(+)(out). It carries out the reaction a plastoquinone + NADPH + (n+1) H(+)(in) = a plastoquinol + NADP(+) + n H(+)(out). Its function is as follows. NDH shuttles electrons from NAD(P)H:plastoquinone, via FMN and iron-sulfur (Fe-S) centers, to quinones in the photosynthetic chain and possibly in a chloroplast respiratory chain. The immediate electron acceptor for the enzyme in this species is believed to be plastoquinone. Couples the redox reaction to proton translocation, and thus conserves the redox energy in a proton gradient. The chain is NAD(P)H-quinone oxidoreductase subunit H, chloroplastic from Liriodendron tulipifera (Tuliptree).